The primary structure comprises 147 residues: D-aminoacyl-tRNA deacylase (147 aa).

Positions 137–138 (GP) match the Gly-cisPro motif, important for rejection of L-amino acids motif.

The protein belongs to the DTD family. Homodimer.

It is found in the cytoplasm. The catalysed reaction is glycyl-tRNA(Ala) + H2O = tRNA(Ala) + glycine + H(+). The enzyme catalyses a D-aminoacyl-tRNA + H2O = a tRNA + a D-alpha-amino acid + H(+). An aminoacyl-tRNA editing enzyme that deacylates mischarged D-aminoacyl-tRNAs. Also deacylates mischarged glycyl-tRNA(Ala), protecting cells against glycine mischarging by AlaRS. Acts via tRNA-based rather than protein-based catalysis; rejects L-amino acids rather than detecting D-amino acids in the active site. By recycling D-aminoacyl-tRNA to D-amino acids and free tRNA molecules, this enzyme counteracts the toxicity associated with the formation of D-aminoacyl-tRNA entities in vivo and helps enforce protein L-homochirality. This is D-aminoacyl-tRNA deacylase from Levilactobacillus brevis (strain ATCC 367 / BCRC 12310 / CIP 105137 / JCM 1170 / LMG 11437 / NCIMB 947 / NCTC 947) (Lactobacillus brevis).